Reading from the N-terminus, the 664-residue chain is Intraflagellar transport protein 70B (664 aa).

7 TPR repeats span residues 11–44 (DGEF…SPRS), 45–78 (RAGL…HPEL), 153–186 (YDGQ…SGYQ), 188–220 (DISY…GIRQ), 385–418 (LTEQ…YDET), 423–456 (IPVL…CNDH), and 458–491 (VWKL…NYDN). Positions 507-534 (YIMTSQNEEAEELMRKIEKEEEQLSYDD) form a coiled coil. One copy of the TPR 8 repeat lies at 543–576 (CIVNLVIGTLYCAKGNYDFGISRVIKSLEPYHKK).

It belongs to the TTC30/dfy-1/fleer family. In terms of assembly, interacts with the IFT B complex components IFT27, IFT46, IFT74, IFT52, IFT57, IFT80, IFT81 and IFT88. Interacts with KIF17.

It localises to the cell projection. Its subcellular location is the cilium. Required for polyglutamylation of axonemal tubulin. Plays a role in anterograde intraflagellar transport (IFT), the process by which cilia precursors are transported from the base of the cilium to the site of their incorporation at the tip. This chain is Intraflagellar transport protein 70B (Ift70b), found in Rattus norvegicus (Rat).